Here is a 778-residue protein sequence, read N- to C-terminus: Aconitate hydratase, mitochondrial (778 aa).

A mitochondrion-targeting transit peptide spans 1–16 (MLSARSAIKRPIVRGL). Substrate is bound by residues Q95 and 188-190 (DSH). C382 contributes to the [4Fe-4S] cluster binding site. At S391 the chain carries Phosphoserine. At T409 the chain carries Phosphothreonine. The [4Fe-4S] cluster site is built by C445 and C448. Residues R471 and R476 each coordinate substrate. S556 is subject to Phosphoserine. Substrate is bound by residues R604 and 667–668 (SR).

The protein belongs to the aconitase/IPM isomerase family. Monomer. Binds to mitochondrial DNA (mtDNA) and identified as component of mitochondrial nucleoids. Requires [4Fe-4S] cluster as cofactor.

The protein resides in the mitochondrion. The protein localises to the cytoplasm. The enzyme catalyses citrate = D-threo-isocitrate. It participates in carbohydrate metabolism; tricarboxylic acid cycle; isocitrate from oxaloacetate: step 2/2. Subject to catabolite regulation. Its function is as follows. Catalyzes the isomerization of citrate to isocitrate via cis-aconitate, a step in the citric acid cycle. Can also provide minor contributions to the reversible dehydration of (R)-homocitrate to cis-homoaconitate, a step in the alpha-aminoadipate pathway for lysine biosynthesis. Also plays an essential role in mtDNA maintenance. May directly protect mtDNA from accumulation of point mutations and ssDNA breaks as a component of mitochondrial nucleoids, or by preventing accumulation of iron citrate thereby alleviating its detrimental effects in mitochondria. The protein is Aconitate hydratase, mitochondrial of Saccharomyces cerevisiae (strain ATCC 204508 / S288c) (Baker's yeast).